The following is a 62-amino-acid chain: Bacteriocin pediocin PA-1 (62 aa).

The propeptide occupies 1 to 18 (MKKIEKLTEKEMANIIGG). 2 disulfide bridges follow: Cys-27–Cys-32 and Cys-42–Cys-62. Residues 40–52 (TTCIINNGAMAWA) are hydrophobic.

Belongs to the bacteriocin class IIA/YGNGV family.

Its subcellular location is the secreted. Bactericidal activity (effective inhibitor of L.monocytogenes). The protein is Bacteriocin pediocin PA-1 (pedA) of Pediococcus acidilactici.